The chain runs to 468 residues: 3-isopropylmalate dehydratase large subunit (468 aa).

Residues Cys347, Cys407, and Cys410 each coordinate [4Fe-4S] cluster.

Belongs to the aconitase/IPM isomerase family. LeuC type 1 subfamily. As to quaternary structure, heterodimer of LeuC and LeuD. The cofactor is [4Fe-4S] cluster.

The enzyme catalyses (2R,3S)-3-isopropylmalate = (2S)-2-isopropylmalate. Its pathway is amino-acid biosynthesis; L-leucine biosynthesis; L-leucine from 3-methyl-2-oxobutanoate: step 2/4. Functionally, catalyzes the isomerization between 2-isopropylmalate and 3-isopropylmalate, via the formation of 2-isopropylmaleate. The polypeptide is 3-isopropylmalate dehydratase large subunit (Synechococcus sp. (strain CC9311)).